The sequence spans 201 residues: Ribosome maturation factor RimP (201 aa).

It belongs to the RimP family.

Its subcellular location is the cytoplasm. Functionally, required for maturation of 30S ribosomal subunits. The polypeptide is Ribosome maturation factor RimP (Rhizobium leguminosarum bv. trifolii (strain WSM2304)).